A 243-amino-acid chain; its full sequence is tRNA pseudouridine synthase A (243 aa).

The active-site Nucleophile is the Asp-53. Tyr-111 serves as a coordination point for substrate.

Belongs to the tRNA pseudouridine synthase TruA family. Homodimer.

It carries out the reaction uridine(38/39/40) in tRNA = pseudouridine(38/39/40) in tRNA. Its function is as follows. Formation of pseudouridine at positions 38, 39 and 40 in the anticodon stem and loop of transfer RNAs. The chain is tRNA pseudouridine synthase A from Chlorobium phaeovibrioides (strain DSM 265 / 1930) (Prosthecochloris vibrioformis (strain DSM 265)).